Reading from the N-terminus, the 110-residue chain is U12-hexatoxin-Hi1a (110 aa).

Residues 1 to 18 form the signal peptide; the sequence is MRVALVFLVLSILAATHG. 3 disulfides stabilise this stretch: cysteine 72–cysteine 86, cysteine 79–cysteine 91, and cysteine 85–cysteine 104.

As to expression, expressed by the venom gland.

It is found in the secreted. In terms of biological role, probable ion channel inhibitor. The sequence is that of U12-hexatoxin-Hi1a from Hadronyche infensa (Fraser island funnel-web spider).